The primary structure comprises 173 residues: Adenine phosphoribosyltransferase (173 aa).

It belongs to the purine/pyrimidine phosphoribosyltransferase family. As to quaternary structure, homodimer.

It localises to the cytoplasm. It carries out the reaction AMP + diphosphate = 5-phospho-alpha-D-ribose 1-diphosphate + adenine. The protein operates within purine metabolism; AMP biosynthesis via salvage pathway; AMP from adenine: step 1/1. Catalyzes a salvage reaction resulting in the formation of AMP, that is energically less costly than de novo synthesis. This is Adenine phosphoribosyltransferase from Chloroflexus aurantiacus (strain ATCC 29366 / DSM 635 / J-10-fl).